Here is a 129-residue protein sequence, read N- to C-terminus: Small ribosomal subunit protein uS11 (129 aa).

This sequence belongs to the universal ribosomal protein uS11 family. Part of the 30S ribosomal subunit. Interacts with proteins S7 and S18. Binds to IF-3.

Its function is as follows. Located on the platform of the 30S subunit, it bridges several disparate RNA helices of the 16S rRNA. Forms part of the Shine-Dalgarno cleft in the 70S ribosome. The sequence is that of Small ribosomal subunit protein uS11 from Anoxybacillus flavithermus (strain DSM 21510 / WK1).